A 337-amino-acid chain; its full sequence is Transcription initiation factor IIB (337 aa).

A TFIIB-type zinc finger spans residues 36–68 (SVQSVCPECGSRQLVHDYERAELVCQNCGLVLD). Zn(2+) is bound by residues Cys41, Cys44, Cys60, and Cys63. 2 repeat units span residues 154 to 237 (SELD…SREL) and 248 to 329 (DYVP…ELAE).

This sequence belongs to the TFIIB family.

In terms of biological role, stabilizes TBP binding to an archaeal box-A promoter. Also responsible for recruiting RNA polymerase II to the pre-initiation complex (DNA-TBP-TFIIB). The polypeptide is Transcription initiation factor IIB (Methanoculleus marisnigri (strain ATCC 35101 / DSM 1498 / JR1)).